The primary structure comprises 198 residues: Peptide methionine sulfoxide reductase MsrA 2 (198 aa).

Residue C32 is part of the active site.

Belongs to the MsrA Met sulfoxide reductase family.

It catalyses the reaction L-methionyl-[protein] + [thioredoxin]-disulfide + H2O = L-methionyl-(S)-S-oxide-[protein] + [thioredoxin]-dithiol. It carries out the reaction [thioredoxin]-disulfide + L-methionine + H2O = L-methionine (S)-S-oxide + [thioredoxin]-dithiol. In terms of biological role, has an important function as a repair enzyme for proteins that have been inactivated by oxidation. Catalyzes the reversible oxidation-reduction of methionine sulfoxide in proteins to methionine. This chain is Peptide methionine sulfoxide reductase MsrA 2 (msrA2), found in Rhizobium meliloti (strain 1021) (Ensifer meliloti).